Reading from the N-terminus, the 463-residue chain is tRNA (guanine(10)-N(2))-methyltransferase TRMT11 (463 aa).

Ala-2 is modified (N-acetylalanine).

The protein belongs to the class I-like SAM-binding methyltransferase superfamily. TRM11 methyltransferase family. In terms of assembly, part of the heterodimeric TRMT11-TRM112 methyltransferase complex; this complex forms an active tRNA methyltransferase, where TRMT112 acts as an activator of the catalytic subunit TRMT11.

The protein localises to the cytoplasm. The catalysed reaction is guanosine(10) in tRNA + S-adenosyl-L-methionine = N(2)-methylguanosine(10) in tRNA + S-adenosyl-L-homocysteine + H(+). Functionally, catalytic subunit of the TRMT11-TRM112 methyltransferase complex, that specifically mediates the S-adenosyl-L-methionine-dependent N(2)-methylation of guanosine nucleotide at position 10 (m2G10) in tRNAs. This is one of the major tRNA (guanine-N(2))-methyltransferases. The protein is tRNA (guanine(10)-N(2))-methyltransferase TRMT11 of Pongo abelii (Sumatran orangutan).